Here is a 49-residue protein sequence, read N- to C-terminus: Large ribosomal subunit protein bL33 (49 aa).

Belongs to the bacterial ribosomal protein bL33 family.

The chain is Large ribosomal subunit protein bL33 from Desulfitobacterium hafniense (strain Y51).